The sequence spans 648 residues: Beta-glucuronidase (648 aa).

The N-terminal stretch at 1–19 (GLAMAWAVLGPLLWGCALA) is a signal peptide. 3 N-linked (GlcNAc...) asparagine glycosylation sites follow: Asn170, Asn269, and Asn417. Glu448 serves as the catalytic Proton donor. N-linked (GlcNAc...) asparagine glycosylation is present at Asn628.

It belongs to the glycosyl hydrolase 2 family. In terms of assembly, homotetramer.

It is found in the lysosome. The enzyme catalyses a beta-D-glucuronoside + H2O = D-glucuronate + an alcohol. Its activity is regulated as follows. Inhibited by L-aspartic acid. Plays an important role in the degradation of dermatan and keratan sulfates. The protein is Beta-glucuronidase (GUSB) of Chlorocebus aethiops (Green monkey).